Here is a 275-residue protein sequence, read N- to C-terminus: Probable dual specificity protein phosphatase DDB_G0271350 (275 aa).

The Tyrosine-protein phosphatase domain maps to 2-143 (GISMILDNFL…LCDLELKLTN (142 aa)). The active-site Phosphocysteine intermediate is the cysteine 87.

Belongs to the protein-tyrosine phosphatase family. Non-receptor class dual specificity subfamily.

It catalyses the reaction O-phospho-L-tyrosyl-[protein] + H2O = L-tyrosyl-[protein] + phosphate. The enzyme catalyses O-phospho-L-seryl-[protein] + H2O = L-seryl-[protein] + phosphate. It carries out the reaction O-phospho-L-threonyl-[protein] + H2O = L-threonyl-[protein] + phosphate. Its function is as follows. Has a dual specificity toward Ser/Thr and Tyr-containing proteins. This is Probable dual specificity protein phosphatase DDB_G0271350 from Dictyostelium discoideum (Social amoeba).